We begin with the raw amino-acid sequence, 688 residues long: Glycine--tRNA ligase beta subunit (688 aa).

This sequence belongs to the class-II aminoacyl-tRNA synthetase family. In terms of assembly, tetramer of two alpha and two beta subunits.

It is found in the cytoplasm. It carries out the reaction tRNA(Gly) + glycine + ATP = glycyl-tRNA(Gly) + AMP + diphosphate. The sequence is that of Glycine--tRNA ligase beta subunit from Lactobacillus delbrueckii subsp. bulgaricus (strain ATCC BAA-365 / Lb-18).